The following is a 392-amino-acid chain: Pyoverdine export membrane fusion protein PvdR (392 aa).

A signal peptide (tat-type signal) is located at residues 1-36 (MRRSTHTRRRLLLGGLGLLGLGSLLAWTSLPFGAQP). Residues 109 to 181 (IDNLKAQLAE…NASLRSDEAE (73 aa)) adopt a coiled-coil conformation. Residues 267–286 (PPKPLDQTSQGGGSPASATA) form a disordered region.

Belongs to the membrane fusion protein (MFP) (TC 8.A.1) family. As to quaternary structure, part of the tripartite efflux system PvdRT-OpmQ, which is composed of an inner membrane component with both ATPase and permease domains, PvdT, a periplasmic membrane fusion protein, PvdR, and an outer membrane component, OpmQ. Post-translationally, predicted to be exported by the Tat system. The position of the signal peptide cleavage has not been experimentally proven.

The protein localises to the periplasm. Functionally, part of the tripartite efflux system PvdRT-OpmQ required for the secretion into the extracellular milieu of the siderophore pyoverdine (PVD), which is involved in iron acquisition. This subunit is an adapter protein that stimulates the ATPase activity of PvdT and connects the inner and outer membrane components. The system is responsible for export of newly synthesized PVD after the final steps of biosynthesis have taken place in the periplasm. It is also responsible for recycling of PVD after internalization of ferri-PVD into the periplasm by the outer-membrane receptor FpvA and release of iron from PVD, thus making PVD available for new cycles of iron uptake. Contributes to resistance against ampicillin. This chain is Pyoverdine export membrane fusion protein PvdR, found in Pseudomonas putida (strain ATCC 47054 / DSM 6125 / CFBP 8728 / NCIMB 11950 / KT2440).